A 1088-amino-acid polypeptide reads, in one-letter code: Receptor-type guanylate cyclase gcy-17 (1088 aa).

The first 20 residues, 1–20 (MLFLRLFIFTPFLILANCQA), serve as a signal peptide directing secretion. Residues 21 to 480 (RRTIKVGLLF…PPDFVRDYLV (460 aa)) are Extracellular-facing. 7 N-linked (GlcNAc...) asparagine glycosylation sites follow: Asn-33, Asn-235, Asn-251, Asn-321, Asn-381, Asn-419, and Asn-434. The helical transmembrane segment at 481-501 (IVIIIVMFLIFAVSAAVGAVF) threads the bilayer. Over 502–1088 (YAIRQKRKEI…SMARSITPEI (587 aa)) the chain is Cytoplasmic. The disordered stretch occupies residues 529-552 (SKKSKSEASQRSFASGPSTSTKLT). Over residues 535–552 (EASQRSFASGPSTSTKLT) the composition is skewed to polar residues. The region spanning 535-824 (EASQRSFASG…KGNLMDHVFN (290 aa)) is the Protein kinase domain. The stretch at 826–854 (LETYASTLEEEVNERTKELVEEQKKSDVL) forms a coiled coil. Residues 882–1012 (TIFFSDVVQF…DAVNTASRME (131 aa)) enclose the Guanylate cyclase domain. The disordered stretch occupies residues 1069–1088 (SNMRKRENTPSMARSITPEI).

It belongs to the adenylyl cyclase class-4/guanylyl cyclase family. As to expression, expressed in PHA sensory neurons.

Its subcellular location is the cell membrane. It catalyses the reaction GTP = 3',5'-cyclic GMP + diphosphate. In terms of biological role, guanylate cyclase involved in the production of the second messenger cGMP. The chain is Receptor-type guanylate cyclase gcy-17 from Caenorhabditis elegans.